The chain runs to 217 residues: GrpE protein homolog 1, mitochondrial (217 aa).

The transit peptide at 1–27 directs the protein to the mitochondrion; that stretch reads MAARCVRLARRSLPALALSFRPSPRLL. N6-acetyllysine; alternate is present on lysine 94. An N6-succinyllysine; alternate modification is found at lysine 94. Lysine 100 carries the N6-acetyllysine modification. An N6-succinyllysine modification is found at lysine 120. Position 215 is an N6-acetyllysine; alternate (lysine 215). Lysine 215 carries the post-translational modification N6-succinyllysine; alternate.

Belongs to the GrpE family. In terms of assembly, probable component of the PAM complex at least composed of a mitochondrial HSP70 protein, GRPEL1 or GRPEL2, TIMM44, TIMM16/PAM16 and TIMM14/DNAJC19. Binds to HSP70, HSC70 and HSJ1B. As to expression, ubiquitous. Particularly abundant in heart, kidney and liver.

It is found in the mitochondrion matrix. Its function is as follows. Essential component of the PAM complex, a complex required for the translocation of transit peptide-containing proteins from the inner membrane into the mitochondrial matrix in an ATP-dependent manner. Seems to control the nucleotide-dependent binding of mitochondrial HSP70 to substrate proteins. This Rattus norvegicus (Rat) protein is GrpE protein homolog 1, mitochondrial (Grpel1).